A 644-amino-acid chain; its full sequence is MSSAVRSPRKKAASDTSDPDRTSSPYSLRETSKVPSRYRNEELYLSPSRSIKRTGSPKKSPAKRLNGGRDSPSVNSLTRNSSLTMLAKAALDYESSSCALEYIFQPKEERRPPRRALALSPPPAPSNDLLAKDLEMIEMHQNLVAGLDDLDNPANMTNEAVEHRDTQSFFNMFSTDQERSAMMKQFKTYKNQTSEDVSTFMRANIKKLYNLLRYKKARQWVMCEFFYSAIDEQIFKEENEFATIIRESFPNLKNWNLTRIEWRSIRKLLGKPRRCSKVFFEEERMYLEEKRMKIRSVYEGSYLNDPSIDLKDLPAKLPRPMVVGNRVFARIRNPYDGIYSGIIDAVIPKGFRIIFDKPDIPPTLVSDTEILLDGKLDLLSIAYFIEQANSKLPSGVRPFVAAVRDSSHPHLVRDVLVSRKIERSGGPLMGPNDERLNGKNAEMVGNFPLKFLVNLVKLTKLIDIKKGLIRQLNELNADAEIQNMTSDKYSKAFQEKYAKTIIDLEHVNQNIDINMNGIQDHHMYFSSNDISTSNMKPEAVRQMCSQQAGRFVEHCNQGLNVENVHALTLIQSLTAVLLQVRTMGTQKISAVDLQSLGDAISEIRTAIHPRNVAFFQDYVEVHMKQFHTIMLESGALAGTVSNRK.

The interval 1–77 (MSSAVRSPRK…GRDSPSVNSL (77 aa)) is disordered. Residues 50 to 62 (SIKRTGSPKKSPA) are compositionally biased toward basic residues.

It belongs to the lin-9 family. In terms of assembly, component of the DRM complex, at least composed of lin-9, lin-35, lin-37, lin-52, lin-53, lin-54- dpl-1 and efl-1. Interacts with zft-11; the interaction is required to suppress the activation of non-neuronal genes in neurons.

It is found in the nucleus. Synthetic multivulva class B (synMuvB) protein. SynMuvB proteins are required to repress the induction of vulval development by Ras signaling and probably act by forming the multiprotein DRM complex that represses transcription. Required for the development of sheath cells in the hermaphrodite gonad and for the development of the male spicule, rays and gonad. In association with the zinc finger protein ztf-11, negatively regulates the expression of non-neuronal genes during neurogenesis. The protein is Protein lin-9 of Caenorhabditis elegans.